Here is a 218-residue protein sequence, read N- to C-terminus: uncharacterized protein (218 aa).

Residues 11 to 31 form a helical membrane-spanning segment; sequence AAGLFPLALMLSGCISYALVS.

Its subcellular location is the membrane. This is an uncharacterized protein from Escherichia coli (strain K12).